Consider the following 458-residue polypeptide: Cobyrinate a,c-diamide synthase (458 aa).

The GATase cobBQ-type domain maps to Lys254 to Ser445. Cys335 acts as the Nucleophile in catalysis.

The protein belongs to the CobB/CbiA family. Requires Mg(2+) as cofactor.

It carries out the reaction cob(II)yrinate + 2 L-glutamine + 2 ATP + 2 H2O = cob(II)yrinate a,c diamide + 2 L-glutamate + 2 ADP + 2 phosphate + 2 H(+). It participates in cofactor biosynthesis; adenosylcobalamin biosynthesis; cob(II)yrinate a,c-diamide from sirohydrochlorin (anaerobic route): step 10/10. Its function is as follows. Catalyzes the ATP-dependent amidation of the two carboxylate groups at positions a and c of cobyrinate, using either L-glutamine or ammonia as the nitrogen source. This is Cobyrinate a,c-diamide synthase from Archaeoglobus fulgidus (strain ATCC 49558 / DSM 4304 / JCM 9628 / NBRC 100126 / VC-16).